The primary structure comprises 518 residues: Glutamate--cysteine ligase (518 aa).

Belongs to the glutamate--cysteine ligase type 1 family. Type 1 subfamily.

The enzyme catalyses L-cysteine + L-glutamate + ATP = gamma-L-glutamyl-L-cysteine + ADP + phosphate + H(+). It participates in sulfur metabolism; glutathione biosynthesis; glutathione from L-cysteine and L-glutamate: step 1/2. The polypeptide is Glutamate--cysteine ligase (Cronobacter sakazakii (strain ATCC BAA-894) (Enterobacter sakazakii)).